Reading from the N-terminus, the 463-residue chain is tRNA (guanine(37)-N(1))-methyltransferase (463 aa).

Residues H207, 245-246, 274-275, and N305 contribute to the S-adenosyl-L-methionine site; these read DL and DG.

It belongs to the class I-like SAM-binding methyltransferase superfamily. TRM5/TYW2 family. As to quaternary structure, monomer.

It localises to the mitochondrion matrix. The protein resides in the nucleus. Its subcellular location is the cytoplasm. It catalyses the reaction guanosine(37) in tRNA + S-adenosyl-L-methionine = N(1)-methylguanosine(37) in tRNA + S-adenosyl-L-homocysteine + H(+). Specifically methylates the N1 position of guanosine-37 in various cytoplasmic and mitochondrial tRNAs. Methylation is not dependent on the nature of the nucleoside 5' of the target nucleoside. This is the first step in the biosynthesis of wybutosine (yW), a modified base adjacent to the anticodon of tRNAs and required for accurate decoding. This chain is tRNA (guanine(37)-N(1))-methyltransferase, found in Pediculus humanus subsp. corporis (Body louse).